The sequence spans 226 residues: uncharacterized protein (226 aa).

This sequence to L.innocua lin2408 and lin2600.

This is an uncharacterized protein from Listeria innocua serovar 6a (strain ATCC BAA-680 / CLIP 11262).